The sequence spans 659 residues: Exocyst complex component 5 (659 aa).

Residues 1–58 (MRFEEEIGSLQMLCDQFQNKINTLEKQMNEEKKDYVQKLHRLHEKNGEAIDKMKQLDH) are a coiled coil.

It belongs to the SEC10 family. As to quaternary structure, the exocyst complex is composed of sec-3/exoc1, sec-5/exoc2, sec-6/exoc3, sec-8/exoc4, sec-10/exoc5, sec-15/exoc6, exo-70/exoc7 and exo-84/exoc8.

Its function is as follows. Component of the exocyst complex involved in the docking of exocytic vesicles with fusion sites on the plasma membrane. This chain is Exocyst complex component 5 (sec-10), found in Caenorhabditis elegans.